A 610-amino-acid polypeptide reads, in one-letter code: DNA replication regulator sld2 (610 aa).

Residues tryptophan 28–isoleucine 42 are compositionally biased toward basic and acidic residues. Disordered stretches follow at residues tryptophan 28–glutamate 115, serine 127–valine 261, and glutamate 338–arginine 610. Composition is skewed to polar residues over residues glutamate 86–tyrosine 110 and threonine 232–valine 261. Acidic residues-rich tracts occupy residues valine 373–alanine 386 and phenylalanine 414–leucine 428. Basic residues predominate over residues valine 442 to arginine 464. Residues alanine 470–histidine 480 show a composition bias toward acidic residues. Basic and acidic residues predominate over residues lysine 493–leucine 503. A compositionally biased stretch (acidic residues) spans glutamate 514–glutamate 527. Positions serine 544–lysine 573 are enriched in basic and acidic residues.

This sequence belongs to the SLD2 family.

It localises to the cytoplasm. The protein resides in the nucleus. In terms of biological role, has a role in the initiation of DNA replication. Required at S-phase checkpoint. The sequence is that of DNA replication regulator sld2 (drc-4) from Neurospora crassa (strain ATCC 24698 / 74-OR23-1A / CBS 708.71 / DSM 1257 / FGSC 987).